We begin with the raw amino-acid sequence, 302 residues long: tRNA pseudouridine synthase B (302 aa).

Catalysis depends on D38, which acts as the Nucleophile.

The protein belongs to the pseudouridine synthase TruB family. Type 1 subfamily.

The enzyme catalyses uridine(55) in tRNA = pseudouridine(55) in tRNA. Its function is as follows. Responsible for synthesis of pseudouridine from uracil-55 in the psi GC loop of transfer RNAs. The polypeptide is tRNA pseudouridine synthase B (Geobacillus thermodenitrificans (strain NG80-2)).